The primary structure comprises 248 residues: MWLCPLALTLTLMAASGAACEVKDICVGSPGIPGTPGSHGLPGRDGRDGVKGDPGPPGPMGPPGDMPCFPGNDGLPGAPGIPGECGEKGEPGERGPPGLPAHLDEELQATLHDFRHQILQTRGALSLQESILAIGGKVFSTNGQSATFDAIQEACARAGGHIAVPRSPEENEAIASFVKKYNTYAYVGLTEGPSPGDFRYSDGTPVNYTNWYPGEPAGRGTEQCVEMYTDGRWNDRNCLYNRLTICEF.

A signal peptide spans 1–20 (MWLCPLALTLTLMAASGAAC). One can recognise a Collagen-like domain in the interval 31 to 100 (GIPGTPGSHG…PGERGPPGLP (70 aa)). Residues 33 to 100 (PGTPGSHGLP…PGERGPPGLP (68 aa)) are disordered. Residues 42-51 (PGRDGRDGVK) are compositionally biased toward basic and acidic residues. Residues 54 to 65 (PGPPGPMGPPGD) show a composition bias toward pro residues. Positions 134-247 (IGGKVFSTNG…CLYNRLTICE (114 aa)) constitute a C-type lectin domain. 2 disulfide bridges follow: cysteine 155–cysteine 246 and cysteine 224–cysteine 238. A glycan (N-linked (GlcNAc...) asparagine) is linked at asparagine 207. Residues glutamate 215, alanine 217, asparagine 234, and aspartate 235 each coordinate Ca(2+).

It belongs to the SFTPA family. As to quaternary structure, oligomeric complex of 6 set of homotrimers.

It localises to the secreted. Its subcellular location is the extracellular space. The protein localises to the extracellular matrix. The protein resides in the surface film. Functionally, in presence of calcium ions, it binds to surfactant phospholipids and contributes to lower the surface tension at the air-liquid interface in the alveoli of the mammalian lung and is essential for normal respiration. Enhances the expression of MYO18A/SP-R210 on alveolar macrophages. The protein is Pulmonary surfactant-associated protein A (SFTPA1) of Macaca mulatta (Rhesus macaque).